A 496-amino-acid chain; its full sequence is Probable cytosol aminopeptidase (496 aa).

2 residues coordinate Mn(2+): K257 and D262. K269 is a catalytic residue. D281, D341, and E343 together coordinate Mn(2+). Residue R345 is part of the active site.

This sequence belongs to the peptidase M17 family. Mn(2+) is required as a cofactor.

It localises to the cytoplasm. It catalyses the reaction Release of an N-terminal amino acid, Xaa-|-Yaa-, in which Xaa is preferably Leu, but may be other amino acids including Pro although not Arg or Lys, and Yaa may be Pro. Amino acid amides and methyl esters are also readily hydrolyzed, but rates on arylamides are exceedingly low.. The enzyme catalyses Release of an N-terminal amino acid, preferentially leucine, but not glutamic or aspartic acids.. Functionally, presumably involved in the processing and regular turnover of intracellular proteins. Catalyzes the removal of unsubstituted N-terminal amino acids from various peptides. The polypeptide is Probable cytosol aminopeptidase (Synechococcus sp. (strain CC9311)).